A 71-amino-acid chain; its full sequence is Venom peptide 2-long (71 aa).

The first 24 residues, 1-24 (MKQSIIIALFATIAVMACLQMVAA), serve as a signal peptide directing secretion. 5 AXPX repeats span residues 24–27 (AVPA), 32–35 (AAPG), 44–47 (ASPE), 50–53 (ASPE), and 54–57 (AEPI). Residues 25–54 (VPAPVPEAAPGPVAEAEAYASPEALASPEA) constitute a propeptide that is removed on maturation. A Leucine amide modification is found at Leu-68.

The protein belongs to the MCD family. Protonectin subfamily. As to expression, expressed by the venom gland.

The protein localises to the secreted. It is found in the target cell membrane. Antimicrobial peptide with strong activity against the fungus B.cinerea (MIC=0.5 ug/ml), and poor activities against the fungus C.albicans (MIC=100 ug/ml), the Gram-positive bacterium S.aureus (MIC=125 ug/ml) and the Gram-negative bacterium E.coli (MIC=125 ug/ml). Functionally, antimicrobial peptide with strong activity against the fungus B.cinerea (MIC=0.4 uM), and poor activities against the fungus C.albicans (MIC=16 uM), the Gram-positive bacterium S.aureus (MIC=20 uM) and the Gram-negative bacterium E.coli (MIC=79 uM). Shows cytolytic activity against insect cell lines. Has potent hemolytic activity against ovine erythrocytes. Has potent hemolytic activity against human erythrocytes (EC(50)=31 uM). In vivo, peptide injection in the vicinity of the head and thorax of lepidopteran larvae induces feeding disorder followed by death due to starvation. This is Venom peptide 2-long from Orancistrocerus drewseni (Solitary wasp).